A 291-amino-acid polypeptide reads, in one-letter code: Filament protein FIN1 (291 aa).

Ser-54 carries the phosphoserine modification. At Thr-68 the chain carries Phosphothreonine. Phosphoserine occurs at positions 74 and 88. A coiled-coil region spans residues 254–284 (VELKEIKDLLLQMLRRQREIESRLSNIELQL).

Homooligomer; in vitro, FIN1 self-assembles into 10 nm diameter filaments. Interacts with the 14-3-3 proteins BMH1 and BMH2, and the protein phosphatase 1 complex catalytic subunit GLC7. In terms of processing, phosphorylated by CDC28. Phosphorylation is required for BMH1 and BMH2 interaction. Dephosphorylation by GLC7 depends on the presence of BMH1 and BMH2.

The protein resides in the nucleus. It localises to the cytoplasm. It is found in the cytoskeleton. Its subcellular location is the spindle pole. In terms of biological role, forms cell-cycle specific filaments between the spindle pole bodies of dividing yeast cells. This is Filament protein FIN1 (FIN1) from Saccharomyces cerevisiae (strain ATCC 204508 / S288c) (Baker's yeast).